The sequence spans 224 residues: MQILLVEDDNTLFQELKKELEQWDFNVVGVEDFSHVMETFETFNPEIVILDVQLPKYDGFYWCRKMRQQSNVPILFLSSRDNPMDQVMSMELGADDYMQKPFYTNVLIAKLQAIYRRVYEFGVEEKRTLSWQDATVDLSKDSIQKDDKTIFLSKTEMIILEMLINKRNQIVTRDTLITALWDDEAFVSDNTLTVNVNRLRKKLSEIDMDSAIETKVGKGYLAHE.

The Response regulatory domain maps to 2–115; sequence QILLVEDDNT…VLIAKLQAIY (114 aa). A 4-aspartylphosphate modification is found at Asp-51. A DNA-binding region (ompR/PhoB-type) is located at residues 126–224; the sequence is KRTLSWQDAT…KVGKGYLAHE (99 aa).

In terms of processing, phosphorylated by GraS.

The protein resides in the cytoplasm. Functionally, member of the two-component regulatory system GraR/GraS involved in resistance against cationic antimicrobial peptides (CAMPs). The protein is Response regulator protein GraR (graR) of Staphylococcus epidermidis (strain ATCC 35984 / DSM 28319 / BCRC 17069 / CCUG 31568 / BM 3577 / RP62A).